We begin with the raw amino-acid sequence, 348 residues long: S-adenosylmethionine:tRNA ribosyltransferase-isomerase (348 aa).

This sequence belongs to the QueA family. As to quaternary structure, monomer.

Its subcellular location is the cytoplasm. The catalysed reaction is 7-aminomethyl-7-carbaguanosine(34) in tRNA + S-adenosyl-L-methionine = epoxyqueuosine(34) in tRNA + adenine + L-methionine + 2 H(+). It participates in tRNA modification; tRNA-queuosine biosynthesis. Transfers and isomerizes the ribose moiety from AdoMet to the 7-aminomethyl group of 7-deazaguanine (preQ1-tRNA) to give epoxyqueuosine (oQ-tRNA). This chain is S-adenosylmethionine:tRNA ribosyltransferase-isomerase, found in Polynucleobacter asymbioticus (strain DSM 18221 / CIP 109841 / QLW-P1DMWA-1) (Polynucleobacter necessarius subsp. asymbioticus).